Here is a 378-residue protein sequence, read N- to C-terminus: UPF0725 protein At1g23970 (378 aa).

This sequence belongs to the UPF0725 (EMB2204) family.

This chain is UPF0725 protein At1g23970, found in Arabidopsis thaliana (Mouse-ear cress).